The chain runs to 131 residues: Type IV wide pilus major component PilA4 (131 aa).

The propeptide at 1-6 (MRNAKG) is leader sequence. F7 is modified (N-methylphenylalanine). A helical membrane pass occupies residues 7–27 (FTLIELLIVIAIIAILAAVLI). A disulfide bridge links C95 with C130.

Interacts with PilQ. Post-translationally, found in three forms of 14-kDa, 18-kDa and a glycosylated 23-kDa form. Both narrow and wide pili are glycosylated.

Its subcellular location is the cell inner membrane. It localises to the cell outer membrane. The protein localises to the periplasm. In terms of biological role, plays an essential role in the assembly of two types of T4P pili: a wide and a narrow that participate in natural transformation and twitching motility. Major component of the wide pilus that is essential for natural transformation working as a DNA translocator structure that spans the inner and outer membranes. In addition, participates in the assembly of the narrow pilus composed of the PilA5 subunit that is required for twitching motility. In Thermus thermophilus (strain ATCC BAA-163 / DSM 7039 / HB27), this protein is Type IV wide pilus major component PilA4 (pilA4).